The sequence spans 212 residues: Thiamine-phosphate synthase (212 aa).

Residues 40 to 44 (QFREK) and Asn-75 each bind 4-amino-2-methyl-5-(diphosphooxymethyl)pyrimidine. 2 residues coordinate Mg(2+): Asp-76 and Asp-95. 4-amino-2-methyl-5-(diphosphooxymethyl)pyrimidine is bound at residue Ser-113. Residue 139-141 (TTS) coordinates 2-[(2R,5Z)-2-carboxy-4-methylthiazol-5(2H)-ylidene]ethyl phosphate. Lys-142 serves as a coordination point for 4-amino-2-methyl-5-(diphosphooxymethyl)pyrimidine. 2-[(2R,5Z)-2-carboxy-4-methylthiazol-5(2H)-ylidene]ethyl phosphate-binding positions include Gly-171 and 191-192 (IS).

It belongs to the thiamine-phosphate synthase family. It depends on Mg(2+) as a cofactor.

It catalyses the reaction 2-[(2R,5Z)-2-carboxy-4-methylthiazol-5(2H)-ylidene]ethyl phosphate + 4-amino-2-methyl-5-(diphosphooxymethyl)pyrimidine + 2 H(+) = thiamine phosphate + CO2 + diphosphate. It carries out the reaction 2-(2-carboxy-4-methylthiazol-5-yl)ethyl phosphate + 4-amino-2-methyl-5-(diphosphooxymethyl)pyrimidine + 2 H(+) = thiamine phosphate + CO2 + diphosphate. The enzyme catalyses 4-methyl-5-(2-phosphooxyethyl)-thiazole + 4-amino-2-methyl-5-(diphosphooxymethyl)pyrimidine + H(+) = thiamine phosphate + diphosphate. Its pathway is cofactor biosynthesis; thiamine diphosphate biosynthesis; thiamine phosphate from 4-amino-2-methyl-5-diphosphomethylpyrimidine and 4-methyl-5-(2-phosphoethyl)-thiazole: step 1/1. Its function is as follows. Condenses 4-methyl-5-(beta-hydroxyethyl)thiazole monophosphate (THZ-P) and 2-methyl-4-amino-5-hydroxymethyl pyrimidine pyrophosphate (HMP-PP) to form thiamine monophosphate (TMP). This chain is Thiamine-phosphate synthase, found in Staphylococcus saprophyticus subsp. saprophyticus (strain ATCC 15305 / DSM 20229 / NCIMB 8711 / NCTC 7292 / S-41).